We begin with the raw amino-acid sequence, 349 residues long: MSATGLGPVRCAFVLLLALCSRPASSQDCSAPCQCPAGPAPRCPAGVSLVLDGCGCCRVCAKQLSELCTERDPCDPHKGLFCDFGSPANRKIGVCTAKDGAPCVFGGTVYQSGESFQSSCKYQCTCLDGSVGCVPLCSVDVRLPSPDCPFPRRVKLPGKCCEEWVCDEPKEHTVVGPALAAYRPEDTFGPDPTMIRANCLVQTTEWSACSKTCGMGISTRVTNDNAFCRLEKQSRLCMVRPCEADLEENIKKGKKCIRTPKISKPIKFELSGCTSMKTYRAKFCGVCTDGRCCTPHRTTTLPVEFKCPDGEVMKKSMMFIKTCACHYNCPGDNDIFESLYYRKMYGDMA.

Residues 1–26 (MSATGLGPVRCAFVLLLALCSRPASS) form the signal peptide. The IGFBP N-terminal domain maps to 27–98 (QDCSAPCQCP…NRKIGVCTAK (72 aa)). 6 disulfide bridges follow: C29–C54, C33–C56, C35–C57, C43–C60, C68–C82, and C74–C95. Positions 101–167 (APCVFGGTVY…GKCCEEWVCD (67 aa)) constitute a VWFC domain. A TSP type-1 domain is found at 198 to 243 (NCLVQTTEWSACSKTCGMGISTRVTNDNAFCRLEKQSRLCMVRPCE). The interval 247–349 (EENIKKGKKC…YYRKMYGDMA (103 aa)) is heparin-binding. Cystine bridges form between C256–C293, C273–C307, C284–C323, C287–C325, and C292–C329. Residues 256–330 (CIRTPKISKP…KTCACHYNCP (75 aa)) enclose the CTCK domain.

This sequence belongs to the CCN family. Monomer. Interacts with TSKU.

It localises to the secreted. The protein localises to the extracellular space. It is found in the extracellular matrix. Its function is as follows. Major connective tissue mitoattractant secreted by vascular endothelial cells. Promotes proliferation and differentiation of chondrocytes. Is involved in the stimulation of osteoblast differentiation and has a critical role in osteogenesis. Mediates heparin- and divalent cation-dependent cell adhesion in many cell types including fibroblasts, myofibroblasts, endothelial and epithelial cells. Enhances fibroblast growth factor-induced DNA synthesis. The chain is CCN family member 2 (CCN2) from Bos taurus (Bovine).